Consider the following 258-residue polypeptide: Leucine-rich repeat-containing protein 3B (258 aa).

The first 33 residues, 1–33 (MTPLDLWLSRSIPMCLLLQSLVLMVLCFPSAST), serve as a signal peptide directing secretion. Residues 34 to 68 (CPKGCTCQRSESPPHGLNVTCSLSRLKEIPPDVPP) enclose the LRRNT domain. Asn51 is a glycosylation site (N-linked (GlcNAc...) asparagine). 3 LRR repeats span residues 69-90 (DTQL…IFHG), 93-114 (MLRR…AFIG), and 118-139 (SLEV…AFAR). Residue Asn98 is glycosylated (N-linked (GlcNAc...) asparagine). Residues 149-196 (NPWHCDCALQQALGGMAHNHERVLCRSSELRDQEGQPFMAVDADLCNL) enclose the LRRCT domain. Residues 204–224 (AMLVTMFGWFAMVISYVVYYV) traverse the membrane as a helical segment.

Belongs to the LRRC3 family.

The protein localises to the membrane. This Danio rerio (Zebrafish) protein is Leucine-rich repeat-containing protein 3B (lrrc3b).